Reading from the N-terminus, the 199-residue chain is uncharacterized protein (199 aa).

A signal peptide spans 1 to 28 (MKKLATVGSLIVTSTLVFSSMPFQNAHA).

The protein localises to the secreted. This is an uncharacterized protein from Staphylococcus aureus (strain NCTC 8325 / PS 47).